A 522-amino-acid polypeptide reads, in one-letter code: Lysine--tRNA ligase (522 aa).

The 'HIGH' region motif lies at P44–T52. Residues K290–S294 carry the 'KMSKS' region motif. Residue K293 participates in ATP binding.

This sequence belongs to the class-I aminoacyl-tRNA synthetase family.

The protein resides in the cytoplasm. The enzyme catalyses tRNA(Lys) + L-lysine + ATP = L-lysyl-tRNA(Lys) + AMP + diphosphate. This chain is Lysine--tRNA ligase, found in Rickettsia conorii (strain ATCC VR-613 / Malish 7).